A 433-amino-acid polypeptide reads, in one-letter code: Schlafen-like protein 2 (433 aa).

The B30.2/SPRY domain occupies 1 to 168; it reads MADTSPRESK…LSVNFGSQPF (168 aa). Residues 199-400 form an SLFN-like fold region; it reads EHVVVKLPFA…RRMASNKCVY (202 aa). Residues glutamate 211 and glutamate 216 contribute to the active site.

Belongs to the Schlafen family. As to quaternary structure, component of the trimeric PUCH (precursor of 21U RNA 5'-end cleavage holoenzyme) complex; consisting of tofu-1, tofu-2 and either slfl-3 or slfl-4. Within the complex, interacts (via N-terminus) with tofu-1 (via N-terminus); the interaction stabilizes tofu-2 and may form a functional nuclease. Within the complex, interacts (via N-terminus) with slfl-3 (via N-terminus); the presence of tofu-1 is required for this interaction. Mg(2+) serves as cofactor. In terms of tissue distribution, expressed in the germline.

It localises to the cytoplasm. It is found in the mitochondrion. Its activity is regulated as follows. Inhibited by ethylenediaminetetraacetic acid (EDTA). Functionally, component of the trimeric PUCH (precursor of 21U RNA 5'-end cleavage holoenzyme) complex, that acts as an endoribonuclease processing the 5'-end of precursor Piwi-interacting RNAs (piRNAs). The PUCH complex consists of tofu-1, tofu-2 and either slfl-3 or slfl-4, with tofu-2 exhibiting endoribonuclease activity. PUCH-mediated processing strictly requires a 7-methyl-G cap (m7 G-cap) and an uracil at position three (U3). PUCH also exhibits a strict bias for piRNA precursors with an A or G at position 1. Mature piRNA production is enhanced by the interaction of PUCH with the PETISCO complex, which is stabilizing piRNA precursors and allows their processing by PUCH. This Caenorhabditis elegans protein is Schlafen-like protein 2.